A 238-amino-acid chain; its full sequence is 1-(5-phosphoribosyl)-5-[(5-phosphoribosylamino)methylideneamino] imidazole-4-carboxamide isomerase (238 aa).

Asp8 serves as the catalytic Proton acceptor. Asp129 serves as the catalytic Proton donor.

This sequence belongs to the HisA/HisF family.

The protein resides in the cytoplasm. It catalyses the reaction 1-(5-phospho-beta-D-ribosyl)-5-[(5-phospho-beta-D-ribosylamino)methylideneamino]imidazole-4-carboxamide = 5-[(5-phospho-1-deoxy-D-ribulos-1-ylimino)methylamino]-1-(5-phospho-beta-D-ribosyl)imidazole-4-carboxamide. Its pathway is amino-acid biosynthesis; L-histidine biosynthesis; L-histidine from 5-phospho-alpha-D-ribose 1-diphosphate: step 4/9. This chain is 1-(5-phosphoribosyl)-5-[(5-phosphoribosylamino)methylideneamino] imidazole-4-carboxamide isomerase, found in Anaeromyxobacter sp. (strain Fw109-5).